Here is a 173-residue protein sequence, read N- to C-terminus: MILSGKEILKNIGSNIIIEPFDEKKINPNSYNLSLHNELLVYENDILDMKTPNPTKVIKIPEDGLLLEPGKLYLGRTNEFTSTSKYVPMLEGRSSTGRLGLFIHVTAGFGDIGFSGYWTLEIFCVQPIKVYPNVEICQIYYHDIHGEYDLYSSGKYQNNKGIQPSLMYKDFEK.

Residues 93–98 (RSSTGR), Asp111, 119–121 (TLE), Gln138, and Tyr151 each bind dCTP. Glu121 functions as the Proton donor/acceptor in the catalytic mechanism.

The protein belongs to the dCTP deaminase family. Homotrimer.

The catalysed reaction is dCTP + 2 H2O = dUMP + NH4(+) + diphosphate. The protein operates within pyrimidine metabolism; dUMP biosynthesis; dUMP from dCTP: step 1/1. Functionally, bifunctional enzyme that catalyzes both the deamination of dCTP to dUTP and the hydrolysis of dUTP to dUMP without releasing the toxic dUTP intermediate. The polypeptide is dCTP deaminase, dUMP-forming (Clostridium beijerinckii (strain ATCC 51743 / NCIMB 8052) (Clostridium acetobutylicum)).